Reading from the N-terminus, the 65-residue chain is Temporin-SN1 (65 aa).

A signal peptide spans 1–22 (MFTTKKSLLLLFFLGTINLSLC). Positions 23–44 (QEERNAEEERRDGDDEGGVEVQ) are cleaved as a propeptide — removed in mature form. Position 65 is a lysine amide (Lys-65).

This sequence belongs to the frog skin active peptide (FSAP) family. Temporin subfamily. Expressed by the skin glands.

The protein localises to the secreted. In terms of biological role, antimicrobial peptide. Active against a variety of Gram-positive bacterial strains. Not active against Gram-negative bacteria and against fungi. Shows hemolytic activity against human erythrocytes. The polypeptide is Temporin-SN1 (Sylvirana spinulosa (Fine-spined frog)).